A 400-amino-acid polypeptide reads, in one-letter code: MSMLNKKTIEDIDVCGKKVLVRCDFNVPLQDGVITDENRLNGALPTIQYLISKGAKVILCSHLGKPKGEAKPELSLAPVAKRLSEMLGKEVVFAADDNVVGENAKKATEKMENGDVVLLENTRYRKEETKNEENFSKELASLAEIFVNDAFGTAHRAHCSTVGAGEFLQERVCGYLIQKELKFLGEAVANPVRPFTAILGGAKVSDKLAVINELLEKVDNLIIGGGMAYTFLKAQGYEVGTSLLEIDKVEYAKEMMEKAKNKGVNLLLPVDVVMADHFAPDATPIVTEDANVKEDYMGLDMGPKTIANFVKTIKESKTVVWNGPMGVFEFENFANGTLSVARAMAELTDATTVIGGGDSAAAVNQLGFGDKMTHVSTGGGASLEFLEGKELPGIAALDNK.

Substrate-binding positions include 24–26 (DFN), arginine 39, 62–65 (HLGK), arginine 123, and arginine 156. ATP-binding positions include lysine 207, glycine 298, glutamate 329, and 356-359 (GGDS).

This sequence belongs to the phosphoglycerate kinase family. As to quaternary structure, monomer.

It localises to the cytoplasm. The catalysed reaction is (2R)-3-phosphoglycerate + ATP = (2R)-3-phospho-glyceroyl phosphate + ADP. Its pathway is carbohydrate degradation; glycolysis; pyruvate from D-glyceraldehyde 3-phosphate: step 2/5. The polypeptide is Phosphoglycerate kinase (Clostridioides difficile (strain 630) (Peptoclostridium difficile)).